The primary structure comprises 208 residues: MKVVEVKHPLVRHKIGLMREGDISTKRFRELAAEVGSLLTYEATADFETETVTIEGWNGPVEVDQIKGKKVTVVPILRAGLGMMDGVLEHIPSARISVVGIYRDEETLEPVPYFEKLASDMNERIALVVDPMLATGGSMIATVDLLKKRGCTSIKALVLVAAPEGIKALEAAHPDIELYTAAIDKCLNEKGYILPGLGDAGDKIFGTK.

5-phospho-alpha-D-ribose 1-diphosphate contacts are provided by residues R78, R103, and 130-138; that span reads DPMLATGGS. Uracil-binding positions include I193 and 198–200; that span reads GDA. D199 contacts 5-phospho-alpha-D-ribose 1-diphosphate.

It belongs to the UPRTase family. Requires Mg(2+) as cofactor.

The enzyme catalyses UMP + diphosphate = 5-phospho-alpha-D-ribose 1-diphosphate + uracil. It functions in the pathway pyrimidine metabolism; UMP biosynthesis via salvage pathway; UMP from uracil: step 1/1. Its activity is regulated as follows. Allosterically activated by GTP. Functionally, catalyzes the conversion of uracil and 5-phospho-alpha-D-ribose 1-diphosphate (PRPP) to UMP and diphosphate. This Shewanella baltica (strain OS223) protein is Uracil phosphoribosyltransferase.